An 82-amino-acid chain; its full sequence is ATP synthase subunit c, chloroplastic (82 aa).

The next 2 helical transmembrane spans lie at 4-24 (IISA…AIGP) and 57-77 (LAFM…LLFA).

This sequence belongs to the ATPase C chain family. F-type ATPases have 2 components, F(1) - the catalytic core - and F(0) - the membrane proton channel. F(1) has five subunits: alpha(3), beta(3), gamma(1), delta(1), epsilon(1). F(0) has four main subunits: a(1), b(1), b'(1) and c(10-14). The alpha and beta chains form an alternating ring which encloses part of the gamma chain. F(1) is attached to F(0) by a central stalk formed by the gamma and epsilon chains, while a peripheral stalk is formed by the delta, b and b' chains.

Its subcellular location is the plastid. The protein resides in the chloroplast thylakoid membrane. Functionally, f(1)F(0) ATP synthase produces ATP from ADP in the presence of a proton or sodium gradient. F-type ATPases consist of two structural domains, F(1) containing the extramembraneous catalytic core and F(0) containing the membrane proton channel, linked together by a central stalk and a peripheral stalk. During catalysis, ATP synthesis in the catalytic domain of F(1) is coupled via a rotary mechanism of the central stalk subunits to proton translocation. In terms of biological role, key component of the F(0) channel; it plays a direct role in translocation across the membrane. A homomeric c-ring of between 10-14 subunits forms the central stalk rotor element with the F(1) delta and epsilon subunits. This chain is ATP synthase subunit c, chloroplastic, found in Heterosigma akashiwo (strain NIES-293 / 8280G21-1).